The primary structure comprises 130 residues: Small ribosomal subunit protein uS8 (130 aa).

The protein belongs to the universal ribosomal protein uS8 family. As to quaternary structure, part of the 30S ribosomal subunit.

One of the primary rRNA binding proteins, it binds directly to 16S rRNA central domain where it helps coordinate assembly of the platform of the 30S subunit. The chain is Small ribosomal subunit protein uS8 from Halobacterium salinarum (strain ATCC 29341 / DSM 671 / R1).